Here is a 145-residue protein sequence, read N- to C-terminus: 3-dehydroquinate dehydratase (145 aa).

The Proton acceptor role is filled by Tyr24. Substrate is bound by residues Asn75, His81, and Asp88. His101 acts as the Proton donor in catalysis. Residues Ile102–Ser103 and Arg112 each bind substrate.

Belongs to the type-II 3-dehydroquinase family. Homododecamer.

The enzyme catalyses 3-dehydroquinate = 3-dehydroshikimate + H2O. The protein operates within metabolic intermediate biosynthesis; chorismate biosynthesis; chorismate from D-erythrose 4-phosphate and phosphoenolpyruvate: step 3/7. Catalyzes a trans-dehydration via an enolate intermediate. This Rhizobium etli (strain CIAT 652) protein is 3-dehydroquinate dehydratase.